Reading from the N-terminus, the 272-residue chain is MLEAPPLLLVAGGVGLALLALRWLATTDLQFFGRAFIVWNEFIMKPIRNLLMGSSKEQRILQHVLQHAVAGDPQSVVAAIDSYSLEKEWAMHVGEKKGQIVDRVLREQQPSVLLELGAYCGYSAVRMARLLLPGARLLTIEFNPDYAAITQRMVEFAGLQDKVTVVLGASQDIIPQLKKKYDVDTLDMVFLDHWKDRYLPDMLLLEECGLLREGTVLLADNVIYPGAPDFLEYVRGNSRFECSHFSSYLEYSKVVDGLEKVVYKGLSGPARP.

Residues 1–6 lie on the Cytoplasmic side of the membrane; it reads MLEAPP. Residues 7–27 form a helical; Signal-anchor for type II membrane protein membrane-spanning segment; that stretch reads LLLVAGGVGLALLALRWLATT. The Extracellular segment spans residues 28-272; it reads DLQFFGRAFI…YKGLSGPARP (245 aa). S-adenosyl-L-methionine is bound by residues V93, E115, S123, E141, 168–171, S170, and D192; that span reads GASQ. Position 192 (D192) interacts with Mg(2+). K195 provides a ligand contact to substrate. 2 residues coordinate Mg(2+): D220 and N221. 2 residues coordinate substrate: N221 and E250. Position 267 is a phosphoserine (S267).

Belongs to the class I-like SAM-binding methyltransferase superfamily. Cation-dependent O-methyltransferase family. Mg(2+) serves as cofactor.

It localises to the cytoplasm. The protein localises to the cell membrane. The catalysed reaction is a catechol + S-adenosyl-L-methionine = a guaiacol + S-adenosyl-L-homocysteine + H(+). It catalyses the reaction 2-hydroxyestrone + S-adenosyl-L-methionine = 2-hydroxy-3-methoxy-estrone + S-adenosyl-L-homocysteine + H(+). The enzyme catalyses 4-hydroxyestrone + S-adenosyl-L-methionine = 4-methoxyestrone + S-adenosyl-L-homocysteine + H(+). It carries out the reaction 2-hydroxyestrone + S-adenosyl-L-methionine = 2-methoxyestrone + S-adenosyl-L-homocysteine + H(+). The catalysed reaction is 4-hydroxy-17beta-estradiol + S-adenosyl-L-methionine = 4-methoxy-17beta-estradiol + S-adenosyl-L-homocysteine + H(+). It catalyses the reaction 2-hydroxy-17beta-estradiol + S-adenosyl-L-methionine = 2-hydroxy-3-methoxy-17beta-estradiol + S-adenosyl-L-homocysteine + H(+). The enzyme catalyses 2-hydroxy-17beta-estradiol + S-adenosyl-L-methionine = 2-methoxy-17beta-estradiol + S-adenosyl-L-homocysteine + H(+). Functionally, catalyzes the O-methylation, and thereby the inactivation, of catecholamine neurotransmitters and catechol hormones. Also shortens the biological half-lives of certain neuroactive drugs, like L-DOPA, alpha-methyl DOPA and isoproterenol. The sequence is that of Catechol O-methyltransferase (COMT) from Bos taurus (Bovine).